The following is a 101-amino-acid chain: Large ribosomal subunit protein eL21 (101 aa).

Residues 1 to 18 (MVKHSRGYRTRSRSLLRK) are compositionally biased toward basic residues. Residues 1 to 23 (MVKHSRGYRTRSRSLLRKSPRER) form a disordered region.

This sequence belongs to the eukaryotic ribosomal protein eL21 family.

In Saccharolobus islandicus (strain Y.N.15.51 / Yellowstone #2) (Sulfolobus islandicus), this protein is Large ribosomal subunit protein eL21.